A 354-amino-acid chain; its full sequence is Fructose-bisphosphate aldolase (354 aa).

Position 50 (Ser-50) interacts with D-glyceraldehyde 3-phosphate. Catalysis depends on Asp-83, which acts as the Proton donor. Positions 84, 105, 142, and 198 each coordinate Zn(2+). A dihydroxyacetone phosphate-binding site is contributed by Gly-199. Residue His-232 participates in Zn(2+) binding. Dihydroxyacetone phosphate is bound by residues 233-235 (GSS) and 275-278 (NIDT).

The protein belongs to the class II fructose-bisphosphate aldolase family. Homodimer. The cofactor is Zn(2+).

It carries out the reaction beta-D-fructose 1,6-bisphosphate = D-glyceraldehyde 3-phosphate + dihydroxyacetone phosphate. Its pathway is carbohydrate biosynthesis; Calvin cycle. It participates in carbohydrate degradation; glycolysis; D-glyceraldehyde 3-phosphate and glycerone phosphate from D-glucose: step 4/4. Its activity is regulated as follows. Activity is stimulated by Fe(2+) in autotrophically grown cells. In terms of biological role, catalyzes the aldol condensation of dihydroxyacetone phosphate (DHAP or glycerone-phosphate) with glyceraldehyde 3-phosphate (G3P) to form fructose 1,6-bisphosphate (FBP) in gluconeogenesis and the reverse reaction in glycolysis. This chain is Fructose-bisphosphate aldolase, found in Xanthobacter flavus.